A 65-amino-acid polypeptide reads, in one-letter code: Protein C' (65 aa).

This sequence belongs to the rhabdoviruses C protein family.

Its function is as follows. Seems to stimulates transcription by the viral polymerase. May play a role in viral pathogenesis or transmission by insects vectors. This is Protein C' (P) from Aedes (Bovine).